We begin with the raw amino-acid sequence, 269 residues long: Phosphate import ATP-binding protein PstB 1 (269 aa).

In terms of domain architecture, ABC transporter spans 25 to 264 (LSTEDLHVFY…PQVDLTNDYI (240 aa)). Residue 57–64 (GPSGSGKS) coordinates ATP.

The protein belongs to the ABC transporter superfamily. Phosphate importer (TC 3.A.1.7) family. In terms of assembly, the complex is composed of two ATP-binding proteins (PstB), two transmembrane proteins (PstC and PstA) and a solute-binding protein (PstS).

It localises to the cell membrane. It carries out the reaction phosphate(out) + ATP + H2O = ADP + 2 phosphate(in) + H(+). Part of the ABC transporter complex PstSACB involved in phosphate import. Responsible for energy coupling to the transport system. This is Phosphate import ATP-binding protein PstB 1 from Lactiplantibacillus plantarum (strain ATCC BAA-793 / NCIMB 8826 / WCFS1) (Lactobacillus plantarum).